A 280-amino-acid polypeptide reads, in one-letter code: TGLKPFACKECGKSFSNKAYFESHKLMHAGIKPFECTECGKQFLLKQLLKSHQLIHTEETPFVCPECGQGYKSKQGLQNHLLCHTGETNFTCKECGKKFLLQKHLNRHKLTHSSEKPFICSECGKRFSRKDGLGMHQLIHTGEKPYVCTECGTSFRVRPQLRIHLRTHTRETPFKCEDCGRVFATGTKLQVHKVTHTGEKPFTCEKCGKSFTQKTNLNTHQLTHTGGKNFKCEECGKCFSRKDYLRVHQRFHTGEKPYKCNECEESFCRKDLLQTHELSH.

10 consecutive C2H2-type zinc fingers follow at residues 6-28 (FACKECGKSFSNKAYFESHKLMH), 34-56 (FECTECGKQFLLKQLLKSHQLIH), 62-84 (FVCPECGQGYKSKQGLQNHLLCH), 90-112 (FTCKECGKKFLLQKHLNRHKLTH), 118-140 (FICSECGKRFSRKDGLGMHQLIH), 146-168 (YVCTECGTSFRVRPQLRIHLRTH), 174-196 (FKCEDCGRVFATGTKLQVHKVTH), 202-224 (FTCEKCGKSFTQKTNLNTHQLTH), 230-252 (FKCEECGKCFSRKDYLRVHQRFH), and 258-280 (YKCNECEESFCRKDLLQTHELSH).

This sequence belongs to the krueppel C2H2-type zinc-finger protein family.

The protein localises to the nucleus. Functionally, may be involved in transcriptional regulation. This Xenopus laevis (African clawed frog) protein is Gastrula zinc finger protein XlCGF46.1.